Reading from the N-terminus, the 120-residue chain is Large ribosomal subunit protein bL17 (120 aa).

It belongs to the bacterial ribosomal protein bL17 family. As to quaternary structure, part of the 50S ribosomal subunit. Contacts protein L32.

The polypeptide is Large ribosomal subunit protein bL17 (Bacillus subtilis (strain 168)).